Here is a 205-residue protein sequence, read N- to C-terminus: Thymidine kinase (205 aa).

ATP is bound by residues 9–16 (SAMNAGKS) and 87–90 (DESQ). E88 serves as the catalytic Proton acceptor. Residues C145, C147, C182, and H185 each contribute to the Zn(2+) site.

This sequence belongs to the thymidine kinase family. In terms of assembly, homotetramer.

Its subcellular location is the cytoplasm. The catalysed reaction is thymidine + ATP = dTMP + ADP + H(+). The chain is Thymidine kinase from Salmonella paratyphi A (strain ATCC 9150 / SARB42).